The chain runs to 164 residues: Axial regulator YABBY 5 (164 aa).

Residues 16-43 form a C4-type zinc finger; sequence CNFCNIILAVNVPCSSLFDIVTVRCGHC.

Belongs to the YABBY family. As to quaternary structure, binds to LUG and LUH; these complexes promote adaxial cell identity in leaves as well as embryonic shoot apical meristem (SAM) initiation and postembryonic SAM maintenance. Interacts with SPL/NZZ and SPEAR2.

It is found in the nucleus. In terms of biological role, promotes adaxial cell identity. Regulates the initiation of embryonic shoot apical meristem (SAM) development. In Arabidopsis thaliana (Mouse-ear cress), this protein is Axial regulator YABBY 5 (YAB5).